The primary structure comprises 160 residues: Conopressin/conophysin, isoform 2 (160 aa).

The first 30 residues, 1–30 (MKCSVLQMSRLSWAMCLMLLMLLLLGTAQG), serve as a signal peptide directing secretion. Residues Cys31 and Cys36 are joined by a disulfide bond. The residue at position 39 (Gly39) is a Glycine amide. A propeptide spanning residues 40-47 (GKRAVDAL) is cleaved from the precursor. 7 cysteine pairs are disulfide-bonded: Cys53–Cys97, Cys56–Cys70, Cys64–Cys87, Cys71–Cys77, Cys104–Cys118, Cys112–Cys130, and Cys119–Cys124.

It belongs to the vasopressin/oxytocin family. In terms of tissue distribution, expressed by the venom gland.

It localises to the secreted. Targets vasopressin-oxytocin related receptors. In Conus monile (Necklace cone), this protein is Conopressin/conophysin, isoform 2.